A 201-amino-acid chain; its full sequence is dTTP/UTP pyrophosphatase (201 aa).

Catalysis depends on Asp-81, which acts as the Proton acceptor.

This sequence belongs to the Maf family. YhdE subfamily. A divalent metal cation serves as cofactor.

It localises to the cytoplasm. It carries out the reaction dTTP + H2O = dTMP + diphosphate + H(+). The enzyme catalyses UTP + H2O = UMP + diphosphate + H(+). In terms of biological role, nucleoside triphosphate pyrophosphatase that hydrolyzes dTTP and UTP. May have a dual role in cell division arrest and in preventing the incorporation of modified nucleotides into cellular nucleic acids. This is dTTP/UTP pyrophosphatase from Dechloromonas aromatica (strain RCB).